We begin with the raw amino-acid sequence, 285 residues long: uncharacterized protein (285 aa).

2 disordered regions span residues 115 to 139 and 152 to 183; these read AAGK…QERN and EHDV…NRGV. Basic and acidic residues-rich tracts occupy residues 128–138 and 152–170; these read KEADVQTKQER and EHDV…DLKT.

This is an uncharacterized protein from Escherichia coli (strain K12).